Consider the following 675-residue polypeptide: Heat shock 70 kDa protein, mitochondrial (675 aa).

Residues Met-1 to Asn-52 constitute a mitochondrion transit peptide. The interval Val-639 to Lys-675 is disordered. Gly residues predominate over residues Gly-649–Gly-661. Positions Pro-666–Lys-675 are enriched in acidic residues.

This sequence belongs to the heat shock protein 70 family.

It localises to the mitochondrion. This Pisum sativum (Garden pea) protein is Heat shock 70 kDa protein, mitochondrial (HSP1).